The primary structure comprises 500 residues: Glucokinase-1 (500 aa).

At S2 the chain carries N-acetylserine. The residue at position 2 (S2) is a Phosphoserine. Residues 12-498 enclose the Hexokinase domain; it reads RAVIQAVDQI…SGVGAALCAL (487 aa). Residues 74 to 216 are hexokinase small subdomain; that stretch reads NGTERGVLLA…MPMIKVVALT (143 aa). An ATP-binding site is contributed by K110. A glucose-binding region spans residues 158 to 184; sequence KLGFTFSYPVDQTSLNSGTLIRWTKGF. A hexokinase large subdomain region spans residues 217-487; sequence NDTVGTYLSH…RKVHLKIAKD (271 aa). S470 carries the post-translational modification Phosphoserine. 487–492 contacts ATP; the sequence is DGSGVG.

Belongs to the hexokinase family. As to quaternary structure, monomer.

The catalysed reaction is D-glucose + ATP = D-glucose 6-phosphate + ADP + H(+). Its pathway is carbohydrate metabolism; hexose metabolism. It functions in the pathway carbohydrate degradation; glycolysis; D-glyceraldehyde 3-phosphate and glycerone phosphate from D-glucose: step 1/4. Functionally, two isoenzymes, hexokinase-1 and hexokinase-2, can phosphorylate keto- and aldohexoses in yeast, whereas a third isoenzyme, GLK, is specific for aldohexoses. All glucose phosphorylating enzymes are involved in glucose uptake. The sequence is that of Glucokinase-1 (GLK1) from Saccharomyces cerevisiae (strain ATCC 204508 / S288c) (Baker's yeast).